The chain runs to 175 residues: ATP synthase subunit b, chloroplastic (175 aa).

A helical transmembrane segment spans residues 24 to 46 (VLNLAVVLAIVLTYVGDALRGLL).

This sequence belongs to the ATPase B chain family. As to quaternary structure, F-type ATPases have 2 components, F(1) - the catalytic core - and F(0) - the membrane proton channel. F(1) has five subunits: alpha(3), beta(3), gamma(1), delta(1), epsilon(1). F(0) has four main subunits: a(1), b(1), b'(1) and c(10-14). The alpha and beta chains form an alternating ring which encloses part of the gamma chain. F(1) is attached to F(0) by a central stalk formed by the gamma and epsilon chains, while a peripheral stalk is formed by the delta, b and b' chains.

The protein localises to the plastid. Its subcellular location is the chloroplast thylakoid membrane. Its function is as follows. F(1)F(0) ATP synthase produces ATP from ADP in the presence of a proton or sodium gradient. F-type ATPases consist of two structural domains, F(1) containing the extramembraneous catalytic core and F(0) containing the membrane proton channel, linked together by a central stalk and a peripheral stalk. During catalysis, ATP synthesis in the catalytic domain of F(1) is coupled via a rotary mechanism of the central stalk subunits to proton translocation. Functionally, component of the F(0) channel, it forms part of the peripheral stalk, linking F(1) to F(0). The protein is ATP synthase subunit b, chloroplastic of Chlorella vulgaris (Green alga).